Consider the following 82-residue polypeptide: Sulfur carrier protein TusA (82 aa).

The active-site Cysteine persulfide intermediate is Cys-19.

This sequence belongs to the sulfur carrier protein TusA family.

The protein resides in the cytoplasm. Its function is as follows. Sulfur carrier protein which probably makes part of a sulfur-relay system. The polypeptide is Sulfur carrier protein TusA (Tolumonas auensis (strain DSM 9187 / NBRC 110442 / TA 4)).